Consider the following 681-residue polypeptide: PAB-dependent poly(A)-specific ribonuclease subunit pan3-like (681 aa).

The C3H1-type zinc finger occupies 9–38 (FSTNIPCRNEQLYGRCPYIDKGCFFQHKNQ). 2 disordered regions span residues 38–58 (QDNAPASSKPPSATAIDPQNS) and 82–123 (SSAS…TVSL). The span at 41-50 (APASSKPPSA) shows a compositional bias: low complexity. The segment covering 96-106 (KSYSSALSSGK) has biased composition (polar residues). The residue at position 165 (S165) is a Phosphoserine.

Belongs to the protein kinase superfamily. PAN3 family.

Its subcellular location is the cytoplasm. Functionally, regulatory subunit of the poly(A)-nuclease (PAN) deadenylation complex. This Schizosaccharomyces pombe (strain 972 / ATCC 24843) (Fission yeast) protein is PAB-dependent poly(A)-specific ribonuclease subunit pan3-like.